The primary structure comprises 63 residues: Bowman-Birk type proteinase inhibitor (63 aa).

7 disulfide bridges follow: Cys7/Cys60, Cys8/Cys23, Cys11/Cys56, Cys13/Cys21, Cys30/Cys37, Cys34/Cys49, and Cys39/Cys47.

As to quaternary structure, monomer.

Its function is as follows. Inhibits trypsin stoichiometrically at the molar ratio of 1:2, with a dissociation constant of 4.2 nM. Does not inhibit chymotrypsin. The chain is Bowman-Birk type proteinase inhibitor from Lupinus albus (White lupine).